A 254-amino-acid chain; its full sequence is tRNA threonylcarbamoyladenosine dehydratase (254 aa).

It belongs to the HesA/MoeB/ThiF family.

In terms of biological role, catalyzes the ATP-dependent dehydration of threonylcarbamoyladenosine at position 37 (t(6)A37) to form cyclic t(6)A37 (ct(6)A37) in tRNAs that read codons beginning with adenine. This Bacillus subtilis (strain 168) protein is tRNA threonylcarbamoyladenosine dehydratase (tcdA).